The primary structure comprises 165 residues: NADH-ubiquinone oxidoreductase chain 6 (165 aa).

The next 4 membrane-spanning stretches (helical) occupy residues 1-21, 47-67, 83-103, and 130-150; these read MVVY…FYSL, SFVP…VFPY, GEVV…FDNF, and GVLV…ALII.

Belongs to the complex I subunit 6 family.

The protein localises to the mitochondrion membrane. It catalyses the reaction a ubiquinone + NADH + 5 H(+)(in) = a ubiquinol + NAD(+) + 4 H(+)(out). Core subunit of the mitochondrial membrane respiratory chain NADH dehydrogenase (Complex I) that is believed to belong to the minimal assembly required for catalysis. Complex I functions in the transfer of electrons from NADH to the respiratory chain. The immediate electron acceptor for the enzyme is believed to be ubiquinone. This chain is NADH-ubiquinone oxidoreductase chain 6 (ND6), found in Strongylocentrotus purpuratus (Purple sea urchin).